Reading from the N-terminus, the 283-residue chain is Acetylglutamate kinase (283 aa).

Substrate is bound by residues 63 to 64 (GG), Arg85, and Asn178.

This sequence belongs to the acetylglutamate kinase family. ArgB subfamily.

The protein resides in the cytoplasm. The catalysed reaction is N-acetyl-L-glutamate + ATP = N-acetyl-L-glutamyl 5-phosphate + ADP. It participates in amino-acid biosynthesis; L-arginine biosynthesis; N(2)-acetyl-L-ornithine from L-glutamate: step 2/4. Catalyzes the ATP-dependent phosphorylation of N-acetyl-L-glutamate. The chain is Acetylglutamate kinase from Prochlorococcus marinus (strain MIT 9301).